Here is a 301-residue protein sequence, read N- to C-terminus: Glycine--tRNA ligase alpha subunit (301 aa).

Belongs to the class-II aminoacyl-tRNA synthetase family. In terms of assembly, tetramer of two alpha and two beta subunits.

The protein resides in the cytoplasm. The enzyme catalyses tRNA(Gly) + glycine + ATP = glycyl-tRNA(Gly) + AMP + diphosphate. This is Glycine--tRNA ligase alpha subunit from Polaromonas sp. (strain JS666 / ATCC BAA-500).